The primary structure comprises 156 residues: Small ribosomal subunit protein uS7 (156 aa).

Belongs to the universal ribosomal protein uS7 family. In terms of assembly, part of the 30S ribosomal subunit. Contacts proteins S9 and S11.

Its function is as follows. One of the primary rRNA binding proteins, it binds directly to 16S rRNA where it nucleates assembly of the head domain of the 30S subunit. Is located at the subunit interface close to the decoding center, probably blocks exit of the E-site tRNA. This is Small ribosomal subunit protein uS7 from Staphylococcus carnosus (strain TM300).